The primary structure comprises 156 residues: Small ribosomal subunit protein uS7 (156 aa).

It belongs to the universal ribosomal protein uS7 family. In terms of assembly, part of the 30S ribosomal subunit. Contacts proteins S9 and S11.

Functionally, one of the primary rRNA binding proteins, it binds directly to 16S rRNA where it nucleates assembly of the head domain of the 30S subunit. Is located at the subunit interface close to the decoding center, probably blocks exit of the E-site tRNA. This Campylobacter curvus (strain 525.92) protein is Small ribosomal subunit protein uS7.